We begin with the raw amino-acid sequence, 351 residues long: Porphobilinogen deaminase (351 aa).

Residue cysteine 242 is modified to S-(dipyrrolylmethanemethyl)cysteine.

This sequence belongs to the HMBS family. In terms of assembly, monomer. Dipyrromethane is required as a cofactor.

It catalyses the reaction 4 porphobilinogen + H2O = hydroxymethylbilane + 4 NH4(+). The protein operates within porphyrin-containing compound metabolism; protoporphyrin-IX biosynthesis; coproporphyrinogen-III from 5-aminolevulinate: step 2/4. In terms of biological role, tetrapolymerization of the monopyrrole PBG into the hydroxymethylbilane pre-uroporphyrinogen in several discrete steps. This Rickettsia peacockii (strain Rustic) protein is Porphobilinogen deaminase.